A 120-amino-acid polypeptide reads, in one-letter code: Large ribosomal subunit protein uL22 (120 aa).

It belongs to the universal ribosomal protein uL22 family. Part of the 50S ribosomal subunit.

Its function is as follows. This protein binds specifically to 23S rRNA; its binding is stimulated by other ribosomal proteins, e.g. L4, L17, and L20. It is important during the early stages of 50S assembly. It makes multiple contacts with different domains of the 23S rRNA in the assembled 50S subunit and ribosome. In terms of biological role, the globular domain of the protein is located near the polypeptide exit tunnel on the outside of the subunit, while an extended beta-hairpin is found that lines the wall of the exit tunnel in the center of the 70S ribosome. In Rippkaea orientalis (strain PCC 8801 / RF-1) (Cyanothece sp. (strain PCC 8801)), this protein is Large ribosomal subunit protein uL22.